The sequence spans 291 residues: Stomatin-like protein 3 (291 aa).

Serine 7 carries the post-translational modification Phosphoserine. A helical; Signal-anchor for type III membrane protein membrane pass occupies residues 29-49 (WILFSLSFLLVIITFPISIWM). The Cytoplasmic segment spans residues 50–291 (CLKIIKEYER…DNHKKLPNKA (242 aa)). Residue serine 241 is modified to Phosphoserine.

The protein belongs to the band 7/mec-2 family. As to quaternary structure, homodimer. Interacts with PIEZO1 and PIEZO2.

It is found in the cell membrane. Required for the function of many mechanoreceptors. Modulate mechanotransduction channels and acid-sensing ion channels (ASIC) proteins. Potentiates PIEZO1 and PIEZO2 function by increasing their sensitivity to mechanical stimulations. The sequence is that of Stomatin-like protein 3 (STOML3) from Homo sapiens (Human).